We begin with the raw amino-acid sequence, 51 residues long: Protein HokD (51 aa).

The helical transmembrane segment at lysine 5–threonine 25 threads the bilayer.

This sequence belongs to the Hok/Gef family.

It localises to the cell inner membrane. Its function is as follows. Toxic component of a type I toxin-antitoxin (TA) system. When overexpressed kills cells within minutes; causes collapse of the transmembrane potential and arrest of respiration. Its toxic effect is probably neutralized by an antisense antitoxin Sok RNA. This Escherichia coli O157:H7 protein is Protein HokD (hokD).